The chain runs to 299 residues: Protease HtpX homolog (299 aa).

The next 2 membrane-spanning stretches (helical) occupy residues 7-24 (GILM…GALI) and 29-46 (GAII…FTFW). His-130 provides a ligand contact to Zn(2+). Residue Glu-131 is part of the active site. His-134 serves as a coordination point for Zn(2+). 2 helical membrane passes run 145–165 (VTAT…FFGG) and 174–194 (PVGI…AGLV). Glu-203 is a Zn(2+) binding site.

Belongs to the peptidase M48B family. Zn(2+) serves as cofactor.

The protein resides in the cell inner membrane. The protein is Protease HtpX homolog of Cereibacter sphaeroides (strain ATCC 17025 / ATH 2.4.3) (Rhodobacter sphaeroides).